The primary structure comprises 287 residues: 2' cyclic ADP-D-ribose synthase BtTIR (287 aa).

Positions 155 to 287 (KQYDFFISHA…DDIVENLKNL (133 aa)) constitute a TIR domain. Glu230 is an active-site residue.

Homodimer.

The catalysed reaction is NAD(+) = 2'cADPR + nicotinamide + H(+). Its function is as follows. NAD(+) hydrolase (NADase) that cleaves NAD(+) into nicotinamide and 2' cyclic ADP-D-ribose (2'cADPR). The chain is 2' cyclic ADP-D-ribose synthase BtTIR from Bacteroides thetaiotaomicron.